The chain runs to 936 residues: Intimin (936 aa).

An N-terminal signal peptide occupies residues 1–41 (MIIHGFCTGTRHKHKLRKTFIMLGAGLGLFFSVNQNSFANG). A LysM domain is found at 63-112 (LFYTLKTGESVAQLSKSQGISVPVIWSLNKHLYSSESEMMKASPGQQIIL). 2 Big-1 domains span residues 557 to 650 (ITNF…VIFV) and 657 to 748 (ITEI…VEFF). Positions 780–831 (KLQATGGNGKYTWKSSNTKIASVDNSGVITLNEKGSATITVVSGDNQSATYT) constitute a BIG2 domain. A disulfide bridge links Cys857 with Cys934.

It belongs to the intimin/invasin family.

Its subcellular location is the cell outer membrane. In terms of biological role, an inverse autotransporter. This is Intimin (eae) from Citrobacter freundii.